The sequence spans 153 residues: SsrA-binding protein (153 aa).

It belongs to the SmpB family.

It localises to the cytoplasm. Required for rescue of stalled ribosomes mediated by trans-translation. Binds to transfer-messenger RNA (tmRNA), required for stable association of tmRNA with ribosomes. tmRNA and SmpB together mimic tRNA shape, replacing the anticodon stem-loop with SmpB. tmRNA is encoded by the ssrA gene; the 2 termini fold to resemble tRNA(Ala) and it encodes a 'tag peptide', a short internal open reading frame. During trans-translation Ala-aminoacylated tmRNA acts like a tRNA, entering the A-site of stalled ribosomes, displacing the stalled mRNA. The ribosome then switches to translate the ORF on the tmRNA; the nascent peptide is terminated with the 'tag peptide' encoded by the tmRNA and targeted for degradation. The ribosome is freed to recommence translation, which seems to be the essential function of trans-translation. In Orientia tsutsugamushi (strain Ikeda) (Rickettsia tsutsugamushi), this protein is SsrA-binding protein.